We begin with the raw amino-acid sequence, 621 residues long: tRNA uridine 5-carboxymethylaminomethyl modification enzyme MnmG (621 aa).

8–13 lines the FAD pocket; sequence GAGHAG. Residue 269–283 participates in NAD(+) binding; sequence GPRYCPSIEDKIHRF.

Belongs to the MnmG family. In terms of assembly, homodimer. Heterotetramer of two MnmE and two MnmG subunits. FAD is required as a cofactor.

It localises to the cytoplasm. Functionally, NAD-binding protein involved in the addition of a carboxymethylaminomethyl (cmnm) group at the wobble position (U34) of certain tRNAs, forming tRNA-cmnm(5)s(2)U34. The protein is tRNA uridine 5-carboxymethylaminomethyl modification enzyme MnmG of Chlorobium phaeovibrioides (strain DSM 265 / 1930) (Prosthecochloris vibrioformis (strain DSM 265)).